The following is a 407-amino-acid chain: Peptidase T (407 aa).

His-77 is a Zn(2+) binding site. The active site involves Asp-79. Asp-138 is a binding site for Zn(2+). Glu-172 functions as the Proton acceptor in the catalytic mechanism. Zn(2+) contacts are provided by Glu-173, Asp-195, and His-377.

Belongs to the peptidase M20B family. Zn(2+) is required as a cofactor.

The protein resides in the cytoplasm. The enzyme catalyses Release of the N-terminal residue from a tripeptide.. Cleaves the N-terminal amino acid of tripeptides. The protein is Peptidase T of Aeromonas salmonicida (strain A449).